Consider the following 363-residue polypeptide: Phosphoserine aminotransferase (363 aa).

The L-glutamate site is built by S9 and R42. Residues 76 to 77, W102, T154, D174, and Q197 each bind pyridoxal 5'-phosphate; that span reads AR. K198 is subject to N6-(pyridoxal phosphate)lysine. 240–241 contacts pyridoxal 5'-phosphate; it reads NT.

The protein belongs to the class-V pyridoxal-phosphate-dependent aminotransferase family. SerC subfamily. In terms of assembly, homodimer. Pyridoxal 5'-phosphate is required as a cofactor.

The protein localises to the cytoplasm. The catalysed reaction is O-phospho-L-serine + 2-oxoglutarate = 3-phosphooxypyruvate + L-glutamate. The enzyme catalyses 4-(phosphooxy)-L-threonine + 2-oxoglutarate = (R)-3-hydroxy-2-oxo-4-phosphooxybutanoate + L-glutamate. The protein operates within amino-acid biosynthesis; L-serine biosynthesis; L-serine from 3-phospho-D-glycerate: step 2/3. It functions in the pathway cofactor biosynthesis; pyridoxine 5'-phosphate biosynthesis; pyridoxine 5'-phosphate from D-erythrose 4-phosphate: step 3/5. Its function is as follows. Catalyzes the reversible conversion of 3-phosphohydroxypyruvate to phosphoserine and of 3-hydroxy-2-oxo-4-phosphonooxybutanoate to phosphohydroxythreonine. The protein is Phosphoserine aminotransferase of Baumannia cicadellinicola subsp. Homalodisca coagulata.